Reading from the N-terminus, the 157-residue chain is UPF0179 protein Mhun_1135 (157 aa).

The protein belongs to the UPF0179 family.

This is UPF0179 protein Mhun_1135 from Methanospirillum hungatei JF-1 (strain ATCC 27890 / DSM 864 / NBRC 100397 / JF-1).